Here is a 432-residue protein sequence, read N- to C-terminus: Adenylosuccinate synthetase (432 aa).

GTP is bound by residues 12–18 (GDEGKGK) and 40–42 (GHT). The Proton acceptor role is filled by aspartate 13. Residues aspartate 13 and glycine 40 each coordinate Mg(2+). Residues 13–16 (DEGK), 38–41 (NAGH), threonine 130, arginine 144, glutamine 226, threonine 241, and arginine 305 contribute to the IMP site. The Proton donor role is filled by histidine 41. Residue 301-307 (STTGRSR) participates in substrate binding. GTP-binding positions include arginine 307, 333–335 (KLD), and 415–417 (SVG).

Belongs to the adenylosuccinate synthetase family. Homodimer. It depends on Mg(2+) as a cofactor.

The protein localises to the cytoplasm. It catalyses the reaction IMP + L-aspartate + GTP = N(6)-(1,2-dicarboxyethyl)-AMP + GDP + phosphate + 2 H(+). Its pathway is purine metabolism; AMP biosynthesis via de novo pathway; AMP from IMP: step 1/2. Plays an important role in the de novo pathway of purine nucleotide biosynthesis. Catalyzes the first committed step in the biosynthesis of AMP from IMP. This Bdellovibrio bacteriovorus (strain ATCC 15356 / DSM 50701 / NCIMB 9529 / HD100) protein is Adenylosuccinate synthetase.